The primary structure comprises 240 residues: UDP-2,3-diacylglucosamine hydrolase (240 aa).

The Mn(2+) site is built by Asp8, His10, Asp41, Asn79, and His114. Substrate is bound at residue Asn79–Arg80. Substrate-binding residues include Asp122, Ser160, Asn164, Lys167, and His195. The Mn(2+) site is built by His195 and His197.

It belongs to the LpxH family. The cofactor is Mn(2+).

Its subcellular location is the cell inner membrane. It carries out the reaction UDP-2-N,3-O-bis[(3R)-3-hydroxytetradecanoyl]-alpha-D-glucosamine + H2O = 2-N,3-O-bis[(3R)-3-hydroxytetradecanoyl]-alpha-D-glucosaminyl 1-phosphate + UMP + 2 H(+). It functions in the pathway glycolipid biosynthesis; lipid IV(A) biosynthesis; lipid IV(A) from (3R)-3-hydroxytetradecanoyl-[acyl-carrier-protein] and UDP-N-acetyl-alpha-D-glucosamine: step 4/6. Hydrolyzes the pyrophosphate bond of UDP-2,3-diacylglucosamine to yield 2,3-diacylglucosamine 1-phosphate (lipid X) and UMP by catalyzing the attack of water at the alpha-P atom. Involved in the biosynthesis of lipid A, a phosphorylated glycolipid that anchors the lipopolysaccharide to the outer membrane of the cell. In Salmonella paratyphi C (strain RKS4594), this protein is UDP-2,3-diacylglucosamine hydrolase.